Consider the following 301-residue polypeptide: Ribosome-inactivating protein (301 aa).

Residues 1-16 (MAEITLEPSDLMAQTN) constitute a propeptide, or 12 (in 10% of the molecules). Residues 162–186 (MATLEEEEVKMQMQMPEAADLAAAA) constitute a propeptide that is removed on maturation. Glu207 is an active-site residue. The propeptide occupies 258–301 (VIPDMQKLGIKDKNEAARIVALVKNQTTAAAATAASADNDDDEA).

It belongs to the ribosome-inactivating protein family. Type 1 RIP subfamily. In terms of assembly, synthesized and stored in the kernel as a 34 kDa inactive precursor. During germination, this neutral precursor is converted into a basic, active form by limited proteolysis, which removes 25 AA of net charge -6 from the center of the polypeptide chain. Additional processing also occurs at the N- and C-termini of the polypeptide. A two-chain active RIP (comprised of 16.5 and 8.5 kDa fragments that remain tightly associated) is produced from this processing event.

It carries out the reaction Endohydrolysis of the N-glycosidic bond at one specific adenosine on the 28S rRNA.. Its function is as follows. Potent catalytic inactivator of eukaryotic protein synthesis. It may be a component of natural defense mechanisms involved in protecting the kernel against soil-borne fungal infections. This is Ribosome-inactivating protein from Zea mays (Maize).